A 134-amino-acid polypeptide reads, in one-letter code: Methylglyoxal synthase (134 aa).

In terms of domain architecture, MGS-like spans 1-134 (MKIALIAHDR…DWRLIQERRN (134 aa)). Substrate contacts are provided by residues H8, K12, 34–37 (TGTT), and 54–55 (SG). Catalysis depends on D60, which acts as the Proton donor/acceptor. H87 contacts substrate.

Belongs to the methylglyoxal synthase family.

The catalysed reaction is dihydroxyacetone phosphate = methylglyoxal + phosphate. Functionally, catalyzes the formation of methylglyoxal from dihydroxyacetone phosphate. This Lysinibacillus sphaericus (strain C3-41) protein is Methylglyoxal synthase.